Reading from the N-terminus, the 109-residue chain is Small ribosomal subunit protein uS17 (109 aa).

The protein belongs to the universal ribosomal protein uS17 family. As to quaternary structure, part of the 30S ribosomal subunit.

In terms of biological role, one of the primary rRNA binding proteins, it binds specifically to the 5'-end of 16S ribosomal RNA. The sequence is that of Small ribosomal subunit protein uS17 from Halobacterium salinarum (strain ATCC 29341 / DSM 671 / R1).